We begin with the raw amino-acid sequence, 84 residues long: Acyl-CoA-binding protein (84 aa).

The region spanning methionine 1–alanine 84 is the ACB domain. An acyl-CoA contacts are provided by residues lysine 12, tyrosine 27–lysine 31, lysine 53, and tyrosine 72.

The protein belongs to the ACBP family. As to quaternary structure, interacts with dhkA.

Functionally, binds to acyl-CoA. Processed into the SDF-2 (spore differentiation factor 2) a peptide which triggers sporulation. SDF-2 appears to stimulate prestalk cells to release additional SDF-2 by acting through a signal transduction pathway that also involves dhkA, regA and PKA. Induces encapsulation of prespore cells in a dhkA-dependent manner. GABA induces the release of acbA from prespore cells and induces the exposure of tagC on the surface of prestalk cells where it can convert acbA to SDF-2. Glutamate acts as a competitive inhibitor and is also able to inhibit induction of sporulation by SDF-2. This Dictyostelium discoideum (Social amoeba) protein is Acyl-CoA-binding protein (acbA).